The primary structure comprises 1521 residues: Retroelement silencing factor 1 (1521 aa).

Lysine 223 participates in a covalent cross-link: Glycyl lysine isopeptide (Lys-Gly) (interchain with G-Cter in SUMO2). Residues 621–640 form a disordered region; the sequence is EKQHKPIQGDPDIADSSLGK. Serine 910 is subject to Phosphoserine. Threonine 996 carries the phosphothreonine modification. 2 stretches are compositionally biased toward polar residues: residues 1093-1105 and 1124-1142; these read KNMP…SQES and LSSN…QSVS. 3 disordered regions span residues 1093-1147, 1204-1230, and 1312-1335; these read KNMP…EKKK, ERAS…KSTR, and EASR…PDKM. At serine 1142 the chain carries Phosphoserine. Low complexity predominate over residues 1214 to 1228; the sequence is PSPESSDPKGSSSKS. The span at 1325–1335 shows a compositional bias: basic and acidic residues; sequence GKFDGKQPDKM. A Glycyl lysine isopeptide (Lys-Gly) (interchain with G-Cter in SUMO2) cross-link involves residue lysine 1411. 2 disordered regions span residues 1425 to 1444 and 1457 to 1485; these read DKQD…VQVS and IPTR…SADE. Residues 1467–1476 are compositionally biased toward basic and acidic residues; it reads SQRDSADSRL. Serine 1482 and serine 1514 each carry phosphoserine.

As to quaternary structure, interacts with SETDB1.

The protein resides in the nucleus. Functionally, plays a role in the regulation of imprinted gene expression, regulates repressive epigenetic modifications associated with SETDB1. Required for the recruitment or accumulation of SETDB1 to the endogenous retroviruses (ERVs) and maintenance of repressive chromatin configuration, contributing to a subset of the SETDB1-dependent ERV silencing in embryonic stem cells. The protein is Retroelement silencing factor 1 of Mus musculus (Mouse).